We begin with the raw amino-acid sequence, 595 residues long: UvrABC system protein C (595 aa).

In terms of domain architecture, GIY-YIG spans 14-91 (DSPGCYIHKD…IQENKPKYNI (78 aa)). Residues 196–231 (DKIVNELRDKMTKASELMEFERAAEYRDLIEGIGLL) form the UVR domain.

The protein belongs to the UvrC family. Interacts with UvrB in an incision complex.

It is found in the cytoplasm. Its function is as follows. The UvrABC repair system catalyzes the recognition and processing of DNA lesions. UvrC both incises the 5' and 3' sides of the lesion. The N-terminal half is responsible for the 3' incision and the C-terminal half is responsible for the 5' incision. The chain is UvrABC system protein C from Streptococcus mutans serotype c (strain ATCC 700610 / UA159).